We begin with the raw amino-acid sequence, 275 residues long: Penicillin-insensitive murein endopeptidase (275 aa).

A signal peptide spans 1–19 (MKKWIAGLLALIAISPVMA). 3 disulfides stabilise this stretch: Cys44–Cys264, Cys187–Cys235, and Cys216–Cys223. Residues His110, His113, Asp120, Asp147, and His211 each contribute to the Zn(2+) site. The segment at 234–262 (GCGAELESWFQPHQPSAKPGKTLPPPLPP) is disordered.

This sequence belongs to the peptidase M74 family. As to quaternary structure, dimer. Zn(2+) serves as cofactor.

The protein localises to the periplasm. Its function is as follows. Murein endopeptidase that cleaves the D-alanyl-meso-2,6-diamino-pimelyl amide bond that connects peptidoglycan strands. Likely plays a role in the removal of murein from the sacculus. This Yersinia enterocolitica serotype O:8 / biotype 1B (strain NCTC 13174 / 8081) protein is Penicillin-insensitive murein endopeptidase.